A 251-amino-acid polypeptide reads, in one-letter code: MLTKRIIPCLDVTAGRVVKGVNFVSLTDVGDPVEIAKAYNEAGADELVFLDITATVELRQTMIDVVERTAEQVFIPLTVGGGISSVADMKELLQAGADKISLNSAAIKRPELIQEGAKKFGNQCIVVAIDAKWNGTNWHVFTRGGREDTGLDAVKWAKKAVGLGAGEILLTSMDGDGTKNGYDIPLTKAISEAVSVPVIASGGCGNANHMVEVFEQTSATAALAASIFHYGELSITHVKNTLLEKGVNIRP.

Active-site residues include Asp11 and Asp130.

The protein belongs to the HisA/HisF family. Heterodimer of HisH and HisF.

The protein localises to the cytoplasm. The catalysed reaction is 5-[(5-phospho-1-deoxy-D-ribulos-1-ylimino)methylamino]-1-(5-phospho-beta-D-ribosyl)imidazole-4-carboxamide + L-glutamine = D-erythro-1-(imidazol-4-yl)glycerol 3-phosphate + 5-amino-1-(5-phospho-beta-D-ribosyl)imidazole-4-carboxamide + L-glutamate + H(+). Its pathway is amino-acid biosynthesis; L-histidine biosynthesis; L-histidine from 5-phospho-alpha-D-ribose 1-diphosphate: step 5/9. Its function is as follows. IGPS catalyzes the conversion of PRFAR and glutamine to IGP, AICAR and glutamate. The HisF subunit catalyzes the cyclization activity that produces IGP and AICAR from PRFAR using the ammonia provided by the HisH subunit. This is Imidazole glycerol phosphate synthase subunit HisF from Listeria welshimeri serovar 6b (strain ATCC 35897 / DSM 20650 / CCUG 15529 / CIP 8149 / NCTC 11857 / SLCC 5334 / V8).